The following is a 68-amino-acid chain: Beta-toxin Cl13 (68 aa).

Residues Lys1–Lys66 enclose the LCN-type CS-alpha/beta domain. 4 disulfide bridges follow: Cys12-Cys65, Cys16-Cys41, Cys25-Cys46, and Cys29-Cys48. Residue Lys66 is modified to Lysine amide.

This sequence belongs to the long (4 C-C) scorpion toxin superfamily. Sodium channel inhibitor family. Beta subfamily. Expressed by the venom gland.

Its subcellular location is the secreted. Its function is as follows. Beta toxins bind voltage-independently at site-4 of sodium channels (Nav) and shift the voltage of activation toward more negative potentials thereby affecting sodium channel activation and promoting spontaneous and repetitive firing. Inhibits sodium channels Nav1.4/SCN4A, Nav1.5/SCN5A and Nav1.6/SCN8A. Also has a weak inhibitory effect on Nav1.2/SCN2A. Is lethal to mice. This Centruroides limpidus (Mexican scorpion) protein is Beta-toxin Cl13.